A 187-amino-acid chain; its full sequence is KS71A fimbrillin (187 aa).

Residues methionine 1–alanine 21 form the signal peptide. A disulfide bond links cysteine 43 and cysteine 82.

This sequence belongs to the fimbrial protein family.

The protein localises to the fimbrium. Its function is as follows. Fimbriae (also called pili), polar filaments radiating from the surface of the bacterium to a length of 0.5-1.5 micrometers and numbering 100-300 per cell, enable bacteria to colonize the epithelium of specific host organs. The polypeptide is KS71A fimbrillin (KS71A) (Escherichia coli).